We begin with the raw amino-acid sequence, 276 residues long: Nuclear egress protein 2 (276 aa).

Residues 1 to 253 are Perinuclear space-facing; sequence MAGMGKPYGG…LFRAPRPGPP (253 aa). A compositionally biased stretch (low complexity) spans 212–225; it reads HSSGAPGPGVAASG. The interval 212-237 is disordered; it reads HSSGAPGPGVAASGPPAPPGRGPARP. The helical transmembrane segment at 254-274 threads the bilayer; the sequence is ALLLLAAGLFLGAAIWWAVGA. Over 275 to 276 the chain is Nuclear; it reads RL.

The protein belongs to the herpesviridae NEC2 protein family. In terms of assembly, forms a heterohexameric complex with NEC1. In terms of processing, phosphorylated.

Its subcellular location is the host nucleus inner membrane. In terms of biological role, plays an essential role in virion nuclear egress, the first step of virion release from infected cell. Within the host nucleus, NEC1 interacts with the newly formed capsid through the vertexes and directs it to the inner nuclear membrane by associating with NEC2. Induces the budding of the capsid at the inner nuclear membrane as well as its envelopment into the perinuclear space. There, the NEC1/NEC2 complex promotes the fusion of the enveloped capsid with the outer nuclear membrane and the subsequent release of the viral capsid into the cytoplasm where it will reach the secondary budding sites in the host Golgi or trans-Golgi network. The sequence is that of Nuclear egress protein 2 from Homo sapiens (Human).